A 175-amino-acid chain; its full sequence is Crossover junction endodeoxyribonuclease RuvC (175 aa).

Catalysis depends on residues Asp-8, Glu-67, and Asp-139. The Mg(2+) site is built by Asp-8, Glu-67, and Asp-139.

The protein belongs to the RuvC family. In terms of assembly, homodimer which binds Holliday junction (HJ) DNA. The HJ becomes 2-fold symmetrical on binding to RuvC with unstacked arms; it has a different conformation from HJ DNA in complex with RuvA. In the full resolvosome a probable DNA-RuvA(4)-RuvB(12)-RuvC(2) complex forms which resolves the HJ. Mg(2+) serves as cofactor.

The protein resides in the cytoplasm. The enzyme catalyses Endonucleolytic cleavage at a junction such as a reciprocal single-stranded crossover between two homologous DNA duplexes (Holliday junction).. Its function is as follows. The RuvA-RuvB-RuvC complex processes Holliday junction (HJ) DNA during genetic recombination and DNA repair. Endonuclease that resolves HJ intermediates. Cleaves cruciform DNA by making single-stranded nicks across the HJ at symmetrical positions within the homologous arms, yielding a 5'-phosphate and a 3'-hydroxyl group; requires a central core of homology in the junction. The consensus cleavage sequence is 5'-(A/T)TT(C/G)-3'. Cleavage occurs on the 3'-side of the TT dinucleotide at the point of strand exchange. HJ branch migration catalyzed by RuvA-RuvB allows RuvC to scan DNA until it finds its consensus sequence, where it cleaves and resolves the cruciform DNA. The sequence is that of Crossover junction endodeoxyribonuclease RuvC from Marinobacter nauticus (strain ATCC 700491 / DSM 11845 / VT8) (Marinobacter aquaeolei).